A 377-amino-acid polypeptide reads, in one-letter code: Cytoplasmic tRNA 2-thiolation protein 1 (377 aa).

It belongs to the TtcA family. CTU1/NCS6/ATPBD3 subfamily.

The protein resides in the cytoplasm. It participates in tRNA modification; 5-methoxycarbonylmethyl-2-thiouridine-tRNA biosynthesis. In terms of biological role, plays a central role in 2-thiolation of mcm(5)S(2)U at tRNA wobble positions of tRNA(Lys), tRNA(Glu) and tRNA(Gln). Directly binds tRNAs and probably acts by catalyzing adenylation of tRNAs, an intermediate required for 2-thiolation. It is unclear whether it acts as a sulfurtransferase that transfers sulfur from thiocarboxylated URM1 onto the uridine of tRNAs at wobble position. Prior mcm(5) tRNA modification by the elongator complex is required for 2-thiolation. May also be involved in protein urmylation. The polypeptide is Cytoplasmic tRNA 2-thiolation protein 1 (Debaryomyces hansenii (strain ATCC 36239 / CBS 767 / BCRC 21394 / JCM 1990 / NBRC 0083 / IGC 2968) (Yeast)).